We begin with the raw amino-acid sequence, 489 residues long: Glycogen synthase (489 aa).

Residue Lys-15 participates in ADP-alpha-D-glucose binding.

This sequence belongs to the glycosyltransferase 1 family. Bacterial/plant glycogen synthase subfamily.

The enzyme catalyses [(1-&gt;4)-alpha-D-glucosyl](n) + ADP-alpha-D-glucose = [(1-&gt;4)-alpha-D-glucosyl](n+1) + ADP + H(+). It participates in glycan biosynthesis; glycogen biosynthesis. Its function is as follows. Synthesizes alpha-1,4-glucan chains using ADP-glucose. The chain is Glycogen synthase from Francisella tularensis subsp. tularensis (strain SCHU S4 / Schu 4).